We begin with the raw amino-acid sequence, 387 residues long: Chorismate synthase (387 aa).

The NADP(+) site is built by Arg42 and Arg48. FMN-binding positions include Arg131–Ser133, Gln251–Ala252, Gly295, Lys310–Thr314, and Arg336.

Belongs to the chorismate synthase family. As to quaternary structure, homotetramer. It depends on FMNH2 as a cofactor.

The catalysed reaction is 5-O-(1-carboxyvinyl)-3-phosphoshikimate = chorismate + phosphate. The protein operates within metabolic intermediate biosynthesis; chorismate biosynthesis; chorismate from D-erythrose 4-phosphate and phosphoenolpyruvate: step 7/7. Its function is as follows. Catalyzes the anti-1,4-elimination of the C-3 phosphate and the C-6 proR hydrogen from 5-enolpyruvylshikimate-3-phosphate (EPSP) to yield chorismate, which is the branch point compound that serves as the starting substrate for the three terminal pathways of aromatic amino acid biosynthesis. This reaction introduces a second double bond into the aromatic ring system. The protein is Chorismate synthase of Syntrophotalea carbinolica (strain DSM 2380 / NBRC 103641 / GraBd1) (Pelobacter carbinolicus).